Consider the following 140-residue polypeptide: Large ribosomal subunit protein bL17 (140 aa).

Belongs to the bacterial ribosomal protein bL17 family. Part of the 50S ribosomal subunit. Contacts protein L32.

This Paramagnetospirillum magneticum (strain ATCC 700264 / AMB-1) (Magnetospirillum magneticum) protein is Large ribosomal subunit protein bL17.